A 203-amino-acid polypeptide reads, in one-letter code: Thymidylate kinase (203 aa).

An ATP-binding site is contributed by Gly9–Thr16.

Belongs to the thymidylate kinase family.

It catalyses the reaction dTMP + ATP = dTDP + ADP. Phosphorylation of dTMP to form dTDP in both de novo and salvage pathways of dTTP synthesis. The protein is Thymidylate kinase of Staphylococcus haemolyticus (strain JCSC1435).